A 204-amino-acid chain; its full sequence is Recombination protein RecR (204 aa).

A C4-type zinc finger spans residues 63 to 78 (CRICFNVADSELCPIC). Positions 86–181 (NKICVVEQPQ…KVTRLARGLP (96 aa)) constitute a Toprim domain.

This sequence belongs to the RecR family.

Its function is as follows. May play a role in DNA repair. It seems to be involved in an RecBC-independent recombinational process of DNA repair. It may act with RecF and RecO. The chain is Recombination protein RecR from Dehalococcoides mccartyi (strain ATCC BAA-2266 / KCTC 15142 / 195) (Dehalococcoides ethenogenes (strain 195)).